Here is a 365-residue protein sequence, read N- to C-terminus: S-adenosylmethionine:tRNA ribosyltransferase-isomerase (365 aa).

This sequence belongs to the QueA family. As to quaternary structure, monomer.

The protein localises to the cytoplasm. The catalysed reaction is 7-aminomethyl-7-carbaguanosine(34) in tRNA + S-adenosyl-L-methionine = epoxyqueuosine(34) in tRNA + adenine + L-methionine + 2 H(+). The protein operates within tRNA modification; tRNA-queuosine biosynthesis. In terms of biological role, transfers and isomerizes the ribose moiety from AdoMet to the 7-aminomethyl group of 7-deazaguanine (preQ1-tRNA) to give epoxyqueuosine (oQ-tRNA). In Rickettsia conorii (strain ATCC VR-613 / Malish 7), this protein is S-adenosylmethionine:tRNA ribosyltransferase-isomerase.